The following is a 1171-amino-acid chain: ATP-dependent helicase/deoxyribonuclease subunit B (1171 aa).

Positions 1–287 constitute a UvrD-like helicase ATP-binding domain; it reads MSLRFVIGRA…IPLMEQPRFH (287 aa). 8 to 15 lines the ATP pocket; that stretch reads GRAGSGKS. The UvrD-like helicase C-terminal domain occupies 281 to 587; the sequence is MEQPRFHSPA…QFANIPPSLD (307 aa). [4Fe-4S] cluster is bound by residues Cys805, Cys1129, Cys1132, and Cys1138.

It belongs to the helicase family. AddB/RexB type 1 subfamily. Heterodimer of AddA and AddB. Mg(2+) is required as a cofactor. The cofactor is [4Fe-4S] cluster.

The heterodimer acts as both an ATP-dependent DNA helicase and an ATP-dependent, dual-direction single-stranded exonuclease. Recognizes the chi site generating a DNA molecule suitable for the initiation of homologous recombination. The AddB subunit has 5' -&gt; 3' nuclease activity but not helicase activity. This Bacillus cereus (strain G9842) protein is ATP-dependent helicase/deoxyribonuclease subunit B.